A 344-amino-acid chain; its full sequence is Trace amine-associated receptor 8a (344 aa).

Residues 1-33 (MTSNFSQAPLQLCYENVNASCIKTPYSPGLRVL) are Extracellular-facing. N-linked (GlcNAc...) asparagine glycans are attached at residues Asn-4 and Asn-18. 2 disulfide bridges follow: Cys-21–Cys-185 and Cys-96–Cys-189. Residues 34 to 54 (LYMVFGFGAVLAVCGNLLVVI) form a helical membrane-spanning segment. Topologically, residues 55–67 (SVLHFKQLHSPAN) are cytoplasmic. A helical membrane pass occupies residues 68 to 88 (FLIASLASADFLVGISVMPFS). Topologically, residues 89 to 102 (MVRSIESCWYFGDT) are extracellular. A helical transmembrane segment spans residues 103 to 127 (FCSLHSCCDAAFCYSSLFHLCFISV). At 128-146 (DRYIAVTDPLVYPTKFTVS) the chain is on the cytoplasmic side. Residues 147-167 (VSGICISISWILPLVYSSAVF) traverse the membrane as a helical segment. Over 168 to 196 (YTGISATGIENLVSALNCVGGCQIVVNQD) the chain is Extracellular. Residues 197–217 (WVLIDFLLFLIPTLVMIILYS) form a helical membrane-spanning segment. Topologically, residues 218-260 (KIFLVAKQQAVKIETSISGSKGESSLESHKARVAKRERKAAKT) are cytoplasmic. A helical membrane pass occupies residues 261–281 (LGVTVVAFMVSWLPYTIDTLI). At 282–291 (DAFMGFITPA) the chain is on the extracellular side. The helical transmembrane segment at 292 to 314 (YVYEICCWSAYYNSAMNPLIYAF) threads the bilayer. Residues 315–344 (FYPWFRKAIKLILSGEILKSHSSTMSLFSE) lie on the Cytoplasmic side of the membrane.

Belongs to the G-protein coupled receptor 1 family.

It is found in the cell membrane. Olfactory receptor activated by trace amines. Trace amine compounds are enriched in animal body fluids and act on trace amine-associated receptors (TAARs) to elicit both intraspecific and interspecific innate behaviors. Ligand-binding causes a conformation change that triggers signaling via G(s)-class of G alpha proteins (GNAL or GNAS). This Rattus norvegicus (Rat) protein is Trace amine-associated receptor 8a.